The sequence spans 148 residues: Large ribosomal subunit protein bL9 (148 aa).

The protein belongs to the bacterial ribosomal protein bL9 family.

Binds to the 23S rRNA. This is Large ribosomal subunit protein bL9 from Acinetobacter baumannii (strain AB307-0294).